Reading from the N-terminus, the 733-residue chain is Oligopeptide transporter 8 (733 aa).

Helical transmembrane passes span 42–62 (MWVL…FFWY), 66–86 (PLTI…HLMA), 115–135 (VLIT…HILS), 147–167 (FLPA…WAGL), 209–229 (FFVI…YLFT), 244–264 (SILV…SFGL), 281–301 (FFAS…ITPL), 357–377 (FAVT…HVLI), 413–433 (LWWF…ICIY), 442–462 (WWGA…VGVI), 531–551 (VGTL…MAEI), 596–616 (YSNI…VYLA), 644–664 (ASAV…HFVF), and 677–697 (VLSG…FLAL).

This sequence belongs to the oligopeptide OPT transporter (TC 2.A.67.1) family.

It is found in the membrane. Its function is as follows. May be involved in the translocation of tetra- and pentapeptides across the cellular membrane in an energy-dependent manner. The protein is Oligopeptide transporter 8 (OPT8) of Arabidopsis thaliana (Mouse-ear cress).